A 55-amino-acid polypeptide reads, in one-letter code: ATP synthase F(0) complex subunit 8 (55 aa).

The helical transmembrane segment at 7–24 (NPWFYIMLMSWLTFSLII) threads the bilayer. The segment at 35–55 (NPPSNKTSTTTRTLPWTWPWT) is disordered. Residues 41–55 (TSTTTRTLPWTWPWT) show a composition bias toward low complexity.

It belongs to the ATPase protein 8 family. In terms of assembly, component of the ATP synthase complex composed at least of ATP5F1A/subunit alpha, ATP5F1B/subunit beta, ATP5MC1/subunit c (homooctomer), MT-ATP6/subunit a, MT-ATP8/subunit 8, ATP5ME/subunit e, ATP5MF/subunit f, ATP5MG/subunit g, ATP5MK/subunit k, ATP5MJ/subunit j, ATP5F1C/subunit gamma, ATP5F1D/subunit delta, ATP5F1E/subunit epsilon, ATP5PF/subunit F6, ATP5PB/subunit b, ATP5PD/subunit d, ATP5PO/subunit OSCP. ATP synthase complex consists of a soluble F(1) head domain (subunits alpha(3) and beta(3)) - the catalytic core - and a membrane F(0) domain - the membrane proton channel (subunits c, a, 8, e, f, g, k and j). These two domains are linked by a central stalk (subunits gamma, delta, and epsilon) rotating inside the F1 region and a stationary peripheral stalk (subunits F6, b, d, and OSCP).

Its subcellular location is the mitochondrion membrane. Subunit 8, of the mitochondrial membrane ATP synthase complex (F(1)F(0) ATP synthase or Complex V) that produces ATP from ADP in the presence of a proton gradient across the membrane which is generated by electron transport complexes of the respiratory chain. ATP synthase complex consist of a soluble F(1) head domain - the catalytic core - and a membrane F(1) domain - the membrane proton channel. These two domains are linked by a central stalk rotating inside the F(1) region and a stationary peripheral stalk. During catalysis, ATP synthesis in the catalytic domain of F(1) is coupled via a rotary mechanism of the central stalk subunits to proton translocation. In vivo, can only synthesize ATP although its ATP hydrolase activity can be activated artificially in vitro. Part of the complex F(0) domain. The protein is ATP synthase F(0) complex subunit 8 of Corythaixoides concolor (Grey go-away-bird).